A 266-amino-acid chain; its full sequence is Adaptin ear-binding coat-associated protein 2 (266 aa).

Disordered regions lie at residues Met165–Thr198 and Asp245–Phe266. Residue Ser181 is modified to Phosphoserine. 2 consecutive short sequence motifs (WXXF motif) follow at residues Trp243 to Phe246 and Trp263 to Phe266. Residues Ser249–Phe266 are compositionally biased toward low complexity.

The protein belongs to the NECAP family. Interacts with AP1G1 and AP2A1 components of the adapter protein complexes AP-1 and AP-2. Interacts with the GAE domain proteins GGA1, GGA2 and GGA3. As to expression, expressed in brain, heart, kidney, liver, lung, skeletal muscles and testis (at protein level).

The protein resides in the cytoplasmic vesicle. It localises to the clathrin-coated vesicle membrane. Its subcellular location is the cell membrane. In terms of biological role, involved in endocytosis. The protein is Adaptin ear-binding coat-associated protein 2 (Necap2) of Mus musculus (Mouse).